Consider the following 286-residue polypeptide: MSGTAEENTREVEAGVVTDFTREMSYGEYLHLDELLAAQHPLSTPEHHDELLFIVQHQTSELWLKLVLHELRSAMRAIAADDLKTALKNIARVKHIQRTLTEQWSVLATLTPTEYAQFRGFLANSSGFQSQQYRAVEFALGNKNAKMLDVFAHDGPGHAQLTELLEAPSLYDEFLRHLARRGHDVPAELLERDVTKAHVHTPALVATFRVIYEDAQRYWTEYEACEELVDLEENFQLWRFRHLKTVERTIGFKRGTGGSSGVGFLARALDLTFFPELYAVRTEIGS.

Substrate-binding positions include 53-57 (FIVQH), Y115, and R119. H242 serves as a coordination point for heme. Residue T256 participates in substrate binding.

This sequence belongs to the tryptophan 2,3-dioxygenase family. As to quaternary structure, homotetramer. The cofactor is heme.

It catalyses the reaction L-tryptophan + O2 = N-formyl-L-kynurenine. Its pathway is amino-acid degradation; L-tryptophan degradation via kynurenine pathway; L-kynurenine from L-tryptophan: step 1/2. Functionally, heme-dependent dioxygenase that catalyzes the oxidative cleavage of the L-tryptophan (L-Trp) pyrrole ring and converts L-tryptophan to N-formyl-L-kynurenine. Catalyzes the oxidative cleavage of the indole moiety. The chain is Tryptophan 2,3-dioxygenase from Kineococcus radiotolerans (strain ATCC BAA-149 / DSM 14245 / SRS30216).